The sequence spans 268 residues: Probable chemotaxis protein methyltransferase (268 aa).

Residues 1-262 enclose the CheR-type methyltransferase domain; sequence MIYSDAGIFL…GITTYRYTTK (262 aa). S-adenosyl-L-methionine is bound by residues asparagine 60, threonine 62, arginine 66, glutamate 104, aspartate 130, 188 to 189, and 205 to 206; these read NL and RN.

It carries out the reaction L-glutamyl-[protein] + S-adenosyl-L-methionine = [protein]-L-glutamate 5-O-methyl ester + S-adenosyl-L-homocysteine. In terms of biological role, methylation of the membrane-bound methyl-accepting chemotaxis proteins (MCP) to form gamma-glutamyl methyl ester residues in MCP. The polypeptide is Probable chemotaxis protein methyltransferase (cheRch1) (Rhizobium etli (strain ATCC 51251 / DSM 11541 / JCM 21823 / NBRC 15573 / CFN 42)).